The primary structure comprises 352 residues: UDP-N-acetylglucosamine--N-acetylmuramyl-(pentapeptide) pyrophosphoryl-undecaprenol N-acetylglucosamine transferase (352 aa).

UDP-N-acetyl-alpha-D-glucosamine is bound by residues 12 to 14, N124, R160, S188, and Q287; that span reads TGG.

This sequence belongs to the glycosyltransferase 28 family. MurG subfamily.

Its subcellular location is the cell inner membrane. The catalysed reaction is di-trans,octa-cis-undecaprenyl diphospho-N-acetyl-alpha-D-muramoyl-L-alanyl-D-glutamyl-meso-2,6-diaminopimeloyl-D-alanyl-D-alanine + UDP-N-acetyl-alpha-D-glucosamine = di-trans,octa-cis-undecaprenyl diphospho-[N-acetyl-alpha-D-glucosaminyl-(1-&gt;4)]-N-acetyl-alpha-D-muramoyl-L-alanyl-D-glutamyl-meso-2,6-diaminopimeloyl-D-alanyl-D-alanine + UDP + H(+). Its pathway is cell wall biogenesis; peptidoglycan biosynthesis. In terms of biological role, cell wall formation. Catalyzes the transfer of a GlcNAc subunit on undecaprenyl-pyrophosphoryl-MurNAc-pentapeptide (lipid intermediate I) to form undecaprenyl-pyrophosphoryl-MurNAc-(pentapeptide)GlcNAc (lipid intermediate II). This Dechloromonas aromatica (strain RCB) protein is UDP-N-acetylglucosamine--N-acetylmuramyl-(pentapeptide) pyrophosphoryl-undecaprenol N-acetylglucosamine transferase.